The primary structure comprises 548 residues: Alpha-humulene synthase (548 aa).

Mg(2+) contacts are provided by Asp-302, Asp-306, and Glu-453. Positions Asp-302 to Asp-306 match the DDXXD motif motif.

This sequence belongs to the terpene synthase family. As to expression, mostly expressed in rhizomes.

The catalysed reaction is (2E,6E)-farnesyl diphosphate = alpha-humulene + diphosphate. Catalyzes the formation of alpha-humulene in the first step of zerumbone biosynthesis, a highly promising multi-anticancer agent. Also mediates formation of beta-caryophyllene at a much lower level. The polypeptide is Alpha-humulene synthase (ZSS1) (Zingiber zerumbet (Shampoo ginger)).